Consider the following 430-residue polypeptide: Serine hydroxymethyltransferase (430 aa).

120-122 (GHI) is a (6S)-5,6,7,8-tetrahydrofolate binding site. An N6-(pyridoxal phosphate)lysine modification is found at lysine 226.

Belongs to the SHMT family. In terms of assembly, homodimer. Requires pyridoxal 5'-phosphate as cofactor.

The protein localises to the cytoplasm. The protein operates within amino-acid biosynthesis; glycine biosynthesis; glycine from L-serine: step 1/1. Its function is as follows. Catalyzes the reversible interconversion of serine and glycine with a modified folate serving as the one-carbon carrier. Also exhibits a pteridine-independent aldolase activity toward beta-hydroxyamino acids, producing glycine and aldehydes, via a retro-aldol mechanism. The polypeptide is Serine hydroxymethyltransferase (Pyrobaculum neutrophilum (strain DSM 2338 / JCM 9278 / NBRC 100436 / V24Sta) (Thermoproteus neutrophilus)).